The following is a 180-amino-acid chain: Large ribosomal subunit protein uL6 (180 aa).

Belongs to the universal ribosomal protein uL6 family. Part of the 50S ribosomal subunit.

Its function is as follows. This protein binds to the 23S rRNA, and is important in its secondary structure. It is located near the subunit interface in the base of the L7/L12 stalk, and near the tRNA binding site of the peptidyltransferase center. The sequence is that of Large ribosomal subunit protein uL6 from Borreliella burgdorferi (strain ATCC 35210 / DSM 4680 / CIP 102532 / B31) (Borrelia burgdorferi).